Consider the following 265-residue polypeptide: DNA-binding dual transcriptional regulator Rns (265 aa).

Decanoate is bound by residues H20 and R75. Residues 164–261 enclose the HTH araC/xylS-type domain; that stretch reads DKVRNLIEKD…GVTPKQFFTY (98 aa). 2 consecutive DNA-binding regions (H-T-H motif) follow at residues 181–202 and 228–251; these read GIIA…ESEN and ISQI…NKHY.

Homodimer; each subunit binds one decanoate molecule.

It is found in the cytoplasm. With respect to regulation, rns-dependent expression of pilins and outer membrane proteins CexE-alpha and CexE-epsilon are inhibited in vivo by decanoic acid (decanoate); has no effect on expression of DnaK or flagellins. Decanoate relieves Rns-dependent repression of nlpA. Functionally, a transcription factor required for the expression of the CS1 and CS2 adhesins of enterotoxigenic E.coli. Required for expression of pilins and some outer membrane lipoproteins. Represses expression of nlpA. The protein is DNA-binding dual transcriptional regulator Rns of Escherichia coli.